We begin with the raw amino-acid sequence, 380 residues long: uncharacterized protein (380 aa).

The 4Fe-4S ferredoxin-type domain maps to 287–318 (LRPKIYQDKCKNCRECLVEKYCPTFAIKRENG).

This is an uncharacterized protein from Methanocaldococcus jannaschii (strain ATCC 43067 / DSM 2661 / JAL-1 / JCM 10045 / NBRC 100440) (Methanococcus jannaschii).